Consider the following 259-residue polypeptide: MASQLRLRSALALVTGAGSGIGRAISVRLAAEGAAVAACDLDGAAAQDTVRLLGSPGSEDGAPRGKHAAFQADVSQGPAARRLLEEVQACFSRPPSVVVSCAGITRDEFLLHMSEEDWDRVIAVNLKGTFLVTQAAAQALVSSGGRGSIINISSIIGKVGNIGQTNYASSKAGVIGLTQTAARELGRHGIRCNSVLPGFIATPMTQKMPEKVKDKVTAMIPLGHMGDPEDVADVVAFLASEDSGYITGASVEVSGGLFM.

NAD(+) is bound by residues 13–21 and 40–41; these read LVTGAGSGI and DL. Ser-58 is subject to Phosphoserine. Lys-66 carries the post-translational modification N6-acetyllysine. 72-74 contacts NAD(+); it reads ADV. Position 154 (Ser-154) interacts with substrate. Lys-158 is subject to N6-succinyllysine. Residue Tyr-167 is the Proton acceptor of the active site. Residues 167-171 and 200-202 each bind NAD(+); these read YASSK and IAT. An N6-succinyllysine modification is found at Lys-171.

This sequence belongs to the short-chain dehydrogenases/reductases (SDR) family. In terms of assembly, heterotetramer with CBR4; contains two molecules of HSD17B8 and CBR4. In terms of tissue distribution, kidney, liver, testis, ovary and spleen. Oviduct, uterus, mammary gland, vagina, prostate, clitoral gland and moderately heart, dorsal skin, brain and lung.

It is found in the mitochondrion matrix. It carries out the reaction a (3R)-3-hydroxyacyl-CoA + NAD(+) = a 3-oxoacyl-CoA + NADH + H(+). The catalysed reaction is 17beta-estradiol + NAD(+) = estrone + NADH + H(+). It catalyses the reaction testosterone + NAD(+) = androst-4-ene-3,17-dione + NADH + H(+). The enzyme catalyses 17beta-hydroxy-5alpha-androstan-3-one + NAD(+) = 5alpha-androstan-3,17-dione + NADH + H(+). The protein operates within lipid metabolism; fatty acid biosynthesis. It functions in the pathway steroid biosynthesis; estrogen biosynthesis. Its pathway is lipid metabolism; mitochondrial fatty acid beta-oxidation. Its function is as follows. Required for the solubility and assembly of the heterotetramer 3-ketoacyl-[acyl carrier protein] (ACP) reductase functional complex (KAR or KAR1) that forms part of the mitochondrial fatty acid synthase (mtFAS). Alpha-subunit of the KAR complex, acts as scaffold protein, required for the stability of carbonyl reductase type-4 (CBR4, beta-subunit of the KAR complex) and for its 3-ketoacyl-ACP reductase activity, thereby participating in mitochondrial fatty acid biosynthesis. Catalyzes the NAD-dependent conversion of (3R)-3-hydroxyacyl-CoA into 3-ketoacyl-CoA (3-oxoacyl-CoA) with no chain length preference, this enzymatic activity is not needed for the KAR function. Prefers (3R)-3-hydroxyacyl-CoA over (3S)-3-hydroxyacyl-CoA and displays enzymatic activity only in the presence of NAD(+)(H). Cooperates with enoyl-CoA hydratase 1 in mitochondria, together they constitute an alternative route to the auxiliary enzyme pathways for the breakdown of Z-PUFA (cis polyunsaturated fatty acid) enoyl-esters. NAD-dependent 17-beta-hydroxysteroid dehydrogenase with highest activity towards estradiol. It efficiently catalyzes the oxidation of estradiol (E2), testosterone, and dihydrotestosterone. Primarily an oxidative enzyme, it can switch to a reductive mode determined in the appropriate physiologic milieu and catalyze the reduction of estrone (E1) to form biologically active estradiol (E2). This chain is (3R)-3-hydroxyacyl-CoA dehydrogenase (Hsd17b8), found in Mus musculus (Mouse).